The sequence spans 508 residues: Glycerol kinase (508 aa).

Thr-15 serves as a coordination point for ADP. Residues Thr-15, Ser-16, and Ser-17 each coordinate ATP. Residue Thr-15 participates in sn-glycerol 3-phosphate binding. An ADP-binding site is contributed by Arg-19. Sn-glycerol 3-phosphate contacts are provided by Arg-85, Glu-86, Tyr-138, and Asp-251. The glycerol site is built by Arg-85, Glu-86, Tyr-138, Asp-251, and Gln-252. ADP-binding residues include Thr-273, Gly-317, and Gly-419. ATP contacts are provided by Thr-273, Gly-317, and Gly-419.

This sequence belongs to the FGGY kinase family.

The enzyme catalyses glycerol + ATP = sn-glycerol 3-phosphate + ADP + H(+). It functions in the pathway polyol metabolism; glycerol degradation via glycerol kinase pathway; sn-glycerol 3-phosphate from glycerol: step 1/1. Its activity is regulated as follows. Inhibited by fructose 1,6-bisphosphate (FBP). Key enzyme in the regulation of glycerol uptake and metabolism. Catalyzes the phosphorylation of glycerol to yield sn-glycerol 3-phosphate. This chain is Glycerol kinase, found in Mycoplasma pneumoniae (strain ATCC 29342 / M129 / Subtype 1) (Mycoplasmoides pneumoniae).